We begin with the raw amino-acid sequence, 308 residues long: PAK4-inhibitor inka1 (308 aa).

The disordered stretch occupies residues 81–105 (EEEESASDPSAVSSPSSERSLEFDS). The span at 87–98 (SDPSAVSSPSSE) shows a compositional bias: low complexity. 2 inka box regions span residues 164–201 (DPEDWTTSLLTRGRNRQPLVLGDNSFADLIHNWMDLPE) and 281–308 (DTDYYQFSALMKSGSRTPIVCNDIIGYI).

This sequence belongs to the INKA family. In terms of assembly, interacts with pak4/pak5.

Its subcellular location is the nucleus. The protein localises to the cytoplasm. Functionally, inhibitor of the serine/threonine-protein kinase pak4/pak5. Acts by binding pak4/pak5 in a substrate-like manner, inhibiting the protein kinase activity. Required for the proper migration of neural crest cells during embryonic development, probably by inhibiting pak4/pak5. In Danio rerio (Zebrafish), this protein is PAK4-inhibitor inka1.